The chain runs to 442 residues: D-inositol 3-phosphate glycosyltransferase (442 aa).

Position 26 (His26) interacts with 1D-myo-inositol 3-phosphate. UDP-N-acetyl-alpha-D-glucosamine contacts are provided by residues Gln32–Pro33 and Gly40. Residues Asp37–Asn42, Lys95, Tyr128, Thr152, and Arg172 contribute to the 1D-myo-inositol 3-phosphate site. 3 residues coordinate UDP-N-acetyl-alpha-D-glucosamine: Arg246, Lys251, and Gln304. The Mg(2+) site is built by Tyr313, Arg314, and Ala316. Glu326 and Glu334 together coordinate UDP-N-acetyl-alpha-D-glucosamine. Thr340 contributes to the Mg(2+) binding site.

The protein belongs to the glycosyltransferase group 1 family. MshA subfamily. In terms of assembly, homodimer.

The enzyme catalyses 1D-myo-inositol 3-phosphate + UDP-N-acetyl-alpha-D-glucosamine = 1D-myo-inositol 2-acetamido-2-deoxy-alpha-D-glucopyranoside 3-phosphate + UDP + H(+). Its function is as follows. Catalyzes the transfer of a N-acetyl-glucosamine moiety to 1D-myo-inositol 3-phosphate to produce 1D-myo-inositol 2-acetamido-2-deoxy-glucopyranoside 3-phosphate in the mycothiol biosynthesis pathway. This Mycolicibacterium gilvum (strain PYR-GCK) (Mycobacterium gilvum (strain PYR-GCK)) protein is D-inositol 3-phosphate glycosyltransferase.